Reading from the N-terminus, the 338-residue chain is Phenylalanine--tRNA ligase alpha subunit (338 aa).

E252 is a Mg(2+) binding site.

This sequence belongs to the class-II aminoacyl-tRNA synthetase family. Phe-tRNA synthetase alpha subunit type 1 subfamily. Tetramer of two alpha and two beta subunits. It depends on Mg(2+) as a cofactor.

The protein localises to the cytoplasm. It carries out the reaction tRNA(Phe) + L-phenylalanine + ATP = L-phenylalanyl-tRNA(Phe) + AMP + diphosphate + H(+). The sequence is that of Phenylalanine--tRNA ligase alpha subunit from Pseudomonas paraeruginosa (strain DSM 24068 / PA7) (Pseudomonas aeruginosa (strain PA7)).